The primary structure comprises 104 residues: Circadian clock oscillator protein KaiB (104 aa).

The protein belongs to the KaiB family. In terms of assembly, the KaiABC complex composition changes during the circadian cycle to control KaiC phosphorylation. Complexes KaiC(6), KaiA(2-4):KaiC(6), KaiB(6):KaiC(6) and KaiC(6):KaiB(6):KaiA(12) are among the most important forms, many form cooperatively. Undergoes a major conformational rearrangment; in the free state forms homotetramers as a dimer of dimers. When bound to the CI domain of KaiC switches to a monomeric thioredoxin-fold (KaiB(fs)). KaiB(fs) binds CikA, leading it to dephosphorylate phospho-RpaA.

In terms of biological role, key component of the KaiABC oscillator complex, which constitutes the main circadian regulator in cyanobacteria. Complex composition changes during the circadian cycle to control KaiC phosphorylation. KaiA stimulates KaiC autophosphorylation, while KaiB sequesters KaiA, leading to KaiC autodephosphorylation. Phospho-Ser-431 KaiC accumulation triggers binding of KaiB to form the KaiB(6):KaiC(6) complex, leading to changes in output regulators CikA and SasA. KaiB switches to a thioredoxin-like fold (KaiB(fs)) when bound to KaiC. KaiB(6):KaiC(6) formation exposes a site for KaiA binding that sequesters KaiA from KaiC, making the KaiC(6):KaiB(6):KaiA(12) complex that results in KaiC autodephosphorylation. Functionally, a metamorphic protein which reversibly switches between an inactive tetrameric fold and a rare, thioredoxin-like monomeric fold (KaiB(fs)). KaiB(fs) binds phospho-KaiC, KaiA and CikA. KaiA and CikA compete for binding to KaiB(fs), and KaiB(fs) and SasA compete for binding to KaiC, thus the clock oscillator and output signal pathway are tightly coupled. The polypeptide is Circadian clock oscillator protein KaiB (Nostoc punctiforme (strain ATCC 29133 / PCC 73102)).